The following is a 367-amino-acid chain: Leu/Ile/Val-binding protein (367 aa).

An N-terminal signal peptide occupies residues 1–23 (MNIKGKALLAGCIALAFSNMALA). Cysteine 76 and cysteine 101 are joined by a disulfide.

This sequence belongs to the leucine-binding protein family.

It localises to the periplasm. In terms of biological role, this protein is a component of the leucine, isoleucine, valine, (threonine) transport system, which is one of the two periplasmic binding protein-dependent transport systems of the high-affinity transport of the branched-chain amino acids. This chain is Leu/Ile/Val-binding protein (livJ), found in Escherichia coli O157:H7.